Consider the following 165-residue polypeptide: Pyruvoyl-dependent arginine decarboxylase (165 aa).

At Ser-53 the chain carries Pyruvic acid (Ser).

The protein belongs to the PdaD family. It depends on pyruvate as a cofactor.

The enzyme catalyses L-arginine + H(+) = agmatine + CO2. In Methanococcus aeolicus (strain ATCC BAA-1280 / DSM 17508 / OCM 812 / Nankai-3), this protein is Pyruvoyl-dependent arginine decarboxylase.